The primary structure comprises 364 residues: UDP-N-acetylglucosamine--N-acetylmuramyl-(pentapeptide) pyrophosphoryl-undecaprenol N-acetylglucosamine transferase (364 aa).

UDP-N-acetyl-alpha-D-glucosamine-binding positions include 15–17 (TGG), asparagine 123, arginine 164, serine 191, and glutamine 286.

This sequence belongs to the glycosyltransferase 28 family. MurG subfamily.

Its subcellular location is the cell inner membrane. The enzyme catalyses di-trans,octa-cis-undecaprenyl diphospho-N-acetyl-alpha-D-muramoyl-L-alanyl-D-glutamyl-meso-2,6-diaminopimeloyl-D-alanyl-D-alanine + UDP-N-acetyl-alpha-D-glucosamine = di-trans,octa-cis-undecaprenyl diphospho-[N-acetyl-alpha-D-glucosaminyl-(1-&gt;4)]-N-acetyl-alpha-D-muramoyl-L-alanyl-D-glutamyl-meso-2,6-diaminopimeloyl-D-alanyl-D-alanine + UDP + H(+). It participates in cell wall biogenesis; peptidoglycan biosynthesis. Functionally, cell wall formation. Catalyzes the transfer of a GlcNAc subunit on undecaprenyl-pyrophosphoryl-MurNAc-pentapeptide (lipid intermediate I) to form undecaprenyl-pyrophosphoryl-MurNAc-(pentapeptide)GlcNAc (lipid intermediate II). The protein is UDP-N-acetylglucosamine--N-acetylmuramyl-(pentapeptide) pyrophosphoryl-undecaprenol N-acetylglucosamine transferase of Prochlorococcus marinus (strain MIT 9515).